The sequence spans 208 residues: Uracil phosphoribosyltransferase (208 aa).

Residues Arg78, Arg103, and 130–138 (DPMLATGGS) each bind 5-phospho-alpha-D-ribose 1-diphosphate. Residues Ile193 and 198–200 (GDA) each bind uracil. Asp199 contacts 5-phospho-alpha-D-ribose 1-diphosphate.

Belongs to the UPRTase family. Mg(2+) is required as a cofactor.

It carries out the reaction UMP + diphosphate = 5-phospho-alpha-D-ribose 1-diphosphate + uracil. It participates in pyrimidine metabolism; UMP biosynthesis via salvage pathway; UMP from uracil: step 1/1. Its activity is regulated as follows. Allosterically activated by GTP. In terms of biological role, catalyzes the conversion of uracil and 5-phospho-alpha-D-ribose 1-diphosphate (PRPP) to UMP and diphosphate. This chain is Uracil phosphoribosyltransferase, found in Pasteurella multocida (strain Pm70).